Here is a 41-residue protein sequence, read N- to C-terminus: Photosystem I reaction center subunit IX (41 aa).

Residues 7 to 27 (YLSTAPVIALAWMSFTAGLLI) traverse the membrane as a helical segment.

Belongs to the PsaJ family.

It localises to the plastid. The protein resides in the chloroplast thylakoid membrane. Its function is as follows. May help in the organization of the PsaE and PsaF subunits. In Tupiella akineta (Green alga), this protein is Photosystem I reaction center subunit IX.